The following is a 513-amino-acid chain: Probable cytosol aminopeptidase (513 aa).

Mn(2+) contacts are provided by Lys277 and Asp282. The active site involves Lys289. Mn(2+)-binding residues include Asp300, Asp359, and Glu361. Residue Arg363 is part of the active site.

This sequence belongs to the peptidase M17 family. It depends on Mn(2+) as a cofactor.

The protein resides in the cytoplasm. The enzyme catalyses Release of an N-terminal amino acid, Xaa-|-Yaa-, in which Xaa is preferably Leu, but may be other amino acids including Pro although not Arg or Lys, and Yaa may be Pro. Amino acid amides and methyl esters are also readily hydrolyzed, but rates on arylamides are exceedingly low.. The catalysed reaction is Release of an N-terminal amino acid, preferentially leucine, but not glutamic or aspartic acids.. In terms of biological role, presumably involved in the processing and regular turnover of intracellular proteins. Catalyzes the removal of unsubstituted N-terminal amino acids from various peptides. The polypeptide is Probable cytosol aminopeptidase (Mycobacterium sp. (strain KMS)).